The primary structure comprises 246 residues: Probable transcriptional regulatory protein YebC (246 aa).

Residues 1–20 form a disordered region; the sequence is MAGHSKWANTRHRKAAQDAK.

The protein belongs to the TACO1 family.

The protein resides in the cytoplasm. The protein is Probable transcriptional regulatory protein YebC of Salmonella choleraesuis (strain SC-B67).